The sequence spans 451 residues: Tubulin alpha-2 chain (451 aa).

Gln-11 contributes to the GTP binding site. Lys-40 bears the N6-acetyllysine mark. The GTP site is built by Glu-71, Gly-144, Thr-145, Thr-179, Asn-206, and Asn-228. Glu-71 is a Mg(2+) binding site. Glu-254 is a catalytic residue.

Belongs to the tubulin family. As to quaternary structure, dimer of alpha and beta chains. A typical microtubule is a hollow water-filled tube with an outer diameter of 25 nm and an inner diameter of 15 nM. Alpha-beta heterodimers associate head-to-tail to form protofilaments running lengthwise along the microtubule wall with the beta-tubulin subunit facing the microtubule plus end conferring a structural polarity. Microtubules usually have 13 protofilaments but different protofilament numbers can be found in some organisms and specialized cells. Mg(2+) is required as a cofactor. In terms of processing, undergoes a tyrosination/detyrosination cycle, the cyclic removal and re-addition of a C-terminal tyrosine residue by the enzymes tubulin tyrosine carboxypeptidase (TTCP) and tubulin tyrosine ligase (TTL), respectively. Acetylation of alpha chains at Lys-40 stabilizes microtubules and affects affinity and processivity of microtubule motors. This modification has a role in multiple cellular functions, ranging from cell motility, cell cycle progression or cell differentiation to intracellular trafficking and signaling.

It is found in the cytoplasm. Its subcellular location is the cytoskeleton. The catalysed reaction is GTP + H2O = GDP + phosphate + H(+). Its function is as follows. Tubulin is the major constituent of microtubules, a cylinder consisting of laterally associated linear protofilaments composed of alpha- and beta-tubulin heterodimers. Microtubules grow by the addition of GTP-tubulin dimers to the microtubule end, where a stabilizing cap forms. Below the cap, tubulin dimers are in GDP-bound state, owing to GTPase activity of alpha-tubulin. In Oryza sativa subsp. japonica (Rice), this protein is Tubulin alpha-2 chain (TUBA).